A 212-amino-acid chain; its full sequence is ATP-dependent dethiobiotin synthetase BioD (212 aa).

13-18 (GIGKTV) contacts ATP. Residue T17 coordinates Mg(2+). K33 is an active-site residue. S37 contacts substrate. E100 provides a ligand contact to Mg(2+). ATP contacts are provided by residues 100 to 103 (EGAG) and 184 to 186 (PRL).

Belongs to the dethiobiotin synthetase family. Homodimer. The cofactor is Mg(2+).

The protein localises to the cytoplasm. The enzyme catalyses (7R,8S)-7,8-diammoniononanoate + CO2 + ATP = (4R,5S)-dethiobiotin + ADP + phosphate + 3 H(+). The protein operates within cofactor biosynthesis; biotin biosynthesis; biotin from 7,8-diaminononanoate: step 1/2. Catalyzes a mechanistically unusual reaction, the ATP-dependent insertion of CO2 between the N7 and N8 nitrogen atoms of 7,8-diaminopelargonic acid (DAPA, also called 7,8-diammoniononanoate) to form a ureido ring. The polypeptide is ATP-dependent dethiobiotin synthetase BioD (Rhodopseudomonas palustris (strain TIE-1)).